The chain runs to 620 residues: 1-deoxy-D-xylulose-5-phosphate synthase (620 aa).

Thiamine diphosphate-binding positions include histidine 80 and 121 to 123 (GHS). Aspartate 152 lines the Mg(2+) pocket. Residues 153 to 154 (GA), asparagine 181, tyrosine 288, and glutamate 370 contribute to the thiamine diphosphate site. Asparagine 181 contacts Mg(2+).

This sequence belongs to the transketolase family. DXPS subfamily. As to quaternary structure, homodimer. Requires Mg(2+) as cofactor. The cofactor is thiamine diphosphate.

The enzyme catalyses D-glyceraldehyde 3-phosphate + pyruvate + H(+) = 1-deoxy-D-xylulose 5-phosphate + CO2. It functions in the pathway metabolic intermediate biosynthesis; 1-deoxy-D-xylulose 5-phosphate biosynthesis; 1-deoxy-D-xylulose 5-phosphate from D-glyceraldehyde 3-phosphate and pyruvate: step 1/1. Catalyzes the acyloin condensation reaction between C atoms 2 and 3 of pyruvate and glyceraldehyde 3-phosphate to yield 1-deoxy-D-xylulose-5-phosphate (DXP). The protein is 1-deoxy-D-xylulose-5-phosphate synthase of Escherichia coli O7:K1 (strain IAI39 / ExPEC).